A 396-amino-acid chain; its full sequence is Putative N(4)-(beta-N-acetylglucosaminyl)-L-asparaginase GG24090 (396 aa).

Positions 1 to 23 (MKRHLGTCLWVLCLASTAFSSLA) are cleaved as a signal peptide. 2 disulfides stabilise this stretch: Cys100–Cys105 and Cys199–Cys215. Thr246 (nucleophile) is an active-site residue. Residues 274-277 (RVGD) and 297-300 (TGDG) contribute to the substrate site. A disulfide bridge links Cys357 with Cys384.

This sequence belongs to the Ntn-hydrolase family. As to quaternary structure, heterotetramer of two alpha and two beta chains arranged as a dimer of alpha/beta heterodimers. In terms of processing, cleaved into an alpha and beta chain by autocatalysis; this activates the enzyme. The N-terminal residue of the beta subunit is responsible for the nucleophile hydrolase activity.

The catalysed reaction is N(4)-(beta-N-acetyl-D-glucosaminyl)-L-asparagine + H2O = N-acetyl-beta-D-glucosaminylamine + L-aspartate + H(+). Functionally, cleaves the GlcNAc-Asn bond which joins oligosaccharides to the peptide of asparagine-linked glycoproteins. This is Putative N(4)-(beta-N-acetylglucosaminyl)-L-asparaginase GG24090 from Drosophila erecta (Fruit fly).